The chain runs to 74 residues: MMPVILLLLLSLAIRCADGKAVQGDSDPSASLLTGDKNHDLPVKRDCTTCAGEECCGRCTCPWGDNCSCIEWGK.

The signal sequence occupies residues 1–19 (MMPVILLLLLSLAIRCADG). The propeptide occupies 20 to 43 (KAVQGDSDPSASLLTGDKNHDLPV). Tryptophan amide is present on W72.

In terms of processing, contains four disulfide bonds. As to expression, expressed by the venom duct.

The protein localises to the secreted. This Conus virgo (Virgin cone) protein is Conotoxin Vi15a.